The chain runs to 450 residues: Tubulin alpha chain (450 aa).

A GTP-binding site is contributed by Gln-11. Residue Lys-40 is modified to N6-acetyllysine. GTP-binding residues include Glu-71, Ser-140, Gly-144, Thr-145, Thr-179, Asn-206, and Asn-228. Residue Glu-71 coordinates Mg(2+). The active site involves Glu-254.

Belongs to the tubulin family. Dimer of alpha and beta chains. A typical microtubule is a hollow water-filled tube with an outer diameter of 25 nm and an inner diameter of 15 nM. Alpha-beta heterodimers associate head-to-tail to form protofilaments running lengthwise along the microtubule wall with the beta-tubulin subunit facing the microtubule plus end conferring a structural polarity. Microtubules usually have 13 protofilaments but different protofilament numbers can be found in some organisms and specialized cells. It depends on Mg(2+) as a cofactor. In terms of processing, acetylation of alpha chains at Lys-40 stabilizes microtubules and affects affinity and processivity of microtubule motors. This modification has a role in multiple cellular functions, ranging from cell motility, cell cycle progression or cell differentiation to intracellular trafficking and signaling.

It is found in the cytoplasm. It localises to the cytoskeleton. The catalysed reaction is GTP + H2O = GDP + phosphate + H(+). Tubulin is the major constituent of microtubules, a cylinder consisting of laterally associated linear protofilaments composed of alpha- and beta-tubulin heterodimers. Microtubules grow by the addition of GTP-tubulin dimers to the microtubule end, where a stabilizing cap forms. Below the cap, tubulin dimers are in GDP-bound state, owing to GTPase activity of alpha-tubulin. This chain is Tubulin alpha chain, found in Tyrophagus putrescentiae (Mold mite).